A 145-amino-acid polypeptide reads, in one-letter code: Basic phospholipase A2 PC17 (145 aa).

Residues 1–21 (MYPAHLLLLLAVCVSLLGASA) form the signal peptide. Positions 22–27 (IPPLPL) are excised as a propeptide. Cystine bridges form between Cys-38–Cys-98, Cys-54–Cys-144, Cys-56–Cys-72, Cys-71–Cys-125, Cys-78–Cys-118, Cys-87–Cys-111, and Cys-105–Cys-116. Positions 55, 57, and 59 each coordinate Ca(2+). Residue His-75 is part of the active site. Ca(2+) is bound at residue Asp-76. Asp-119 is a catalytic residue.

The protein belongs to the phospholipase A2 family. Group I subfamily. D49 sub-subfamily. Ca(2+) serves as cofactor.

It localises to the secreted. The catalysed reaction is a 1,2-diacyl-sn-glycero-3-phosphocholine + H2O = a 1-acyl-sn-glycero-3-phosphocholine + a fatty acid + H(+). Functionally, PLA2 catalyzes the calcium-dependent hydrolysis of the 2-acyl groups in 3-sn-phosphoglycerides. In Laticauda laticaudata (Blue-ringed sea krait), this protein is Basic phospholipase A2 PC17.